The chain runs to 359 residues: Membrane-bound lytic murein transglycosylase C (359 aa).

The N-terminal stretch at 1-16 (MKKYLALALIAPLLIS) is a signal peptide. Residue C17 is the site of N-palmitoyl cysteine attachment. The S-diacylglycerol cysteine moiety is linked to residue C17.

This sequence belongs to the transglycosylase Slt family.

Its subcellular location is the cell outer membrane. The enzyme catalyses Exolytic cleavage of the (1-&gt;4)-beta-glycosidic linkage between N-acetylmuramic acid (MurNAc) and N-acetylglucosamine (GlcNAc) residues in peptidoglycan, from either the reducing or the non-reducing ends of the peptidoglycan chains, with concomitant formation of a 1,6-anhydrobond in the MurNAc residue.. In terms of biological role, murein-degrading enzyme. May play a role in recycling of muropeptides during cell elongation and/or cell division. The chain is Membrane-bound lytic murein transglycosylase C from Shigella sonnei (strain Ss046).